A 271-amino-acid polypeptide reads, in one-letter code: Nodulin-26 (271 aa).

2 helical membrane-spanning segments follow: residues 40-62 and 72-94; these read LVAE…VVNE and GIAI…ISGG. An NPA 1 motif is present at residues 97–99; that stretch reads NPA. Transmembrane regions (helical) follow at residues 115–137, 152–174, and 181–203; these read VPAY…RLLF, TNLQ…ICGV, and VGEF…GGPV. The NPA 2 signature appears at 209-211; it reads NPA. Residues 225–247 form a helical membrane-spanning segment; it reads GIWIYLLAPVVGAIAGAWVYNIV. Residue Ser262 is modified to Phosphoserine; by CPK.

It belongs to the MIP/aquaporin (TC 1.A.8) family. NIP (TC 1.A.8.12) subfamily.

It localises to the symbiosome. Its subcellular location is the peribacteroid membrane. Its function is as follows. Aquaporins facilitate the transport of water and small neutral solutes across cell membranes. This aquaporin may function in transporting small molecules across the peribacteroid membranes. This Glycine max (Soybean) protein is Nodulin-26.